Reading from the N-terminus, the 432-residue chain is Anaerobic glycerol-3-phosphate dehydrogenase subunit B (432 aa).

It belongs to the anaerobic G-3-P dehydrogenase subunit B family. As to quaternary structure, composed of a catalytic GlpA/B dimer and of membrane bound GlpC. Requires FMN as cofactor.

It carries out the reaction a quinone + sn-glycerol 3-phosphate = dihydroxyacetone phosphate + a quinol. It participates in polyol metabolism; glycerol degradation via glycerol kinase pathway; glycerone phosphate from sn-glycerol 3-phosphate (anaerobic route): step 1/1. In terms of biological role, conversion of glycerol 3-phosphate to dihydroxyacetone. Uses fumarate or nitrate as electron acceptor. This Haemophilus influenzae (strain 86-028NP) protein is Anaerobic glycerol-3-phosphate dehydrogenase subunit B.